A 418-amino-acid polypeptide reads, in one-letter code: Sprouty-related, EVH1 domain-containing protein 2 (418 aa).

Residues 5–122 (THPDDDSYIV…RGVRKAIEDL (118 aa)) enclose the WH1 domain. The segment at 127-172 (TTSSSTIHNEAELGDDDVFTTATDSSSNSSQKREQPTRTVSSPTSC) is disordered. The segment covering 146-156 (TTATDSSSNSS) has biased composition (polar residues). One can recognise a KBD domain in the interval 201-257 (PYRQVSFPDDDEEIVRINPREKIWMTGYEDYRHAPVRGKYPDPSEDVDSSYVRFAKG). S206 is subject to Phosphoserine. Residues Y228 and Y231 each carry the phosphotyrosine modification. The tract at residues 275 to 302 (GLGEDPKGRGGSVIKTQPSRGKSRRRKE) is disordered. The SPR domain maps to 308 to 416 (RCVYCRDMFN…CRCCGGKHKA (109 aa)).

As to quaternary structure, homodimer and heterodimer. Able to interact with SPRED1 to form heterodimers. Interacts with RAS. May interact with ZDHHC13 (via ANK repeats) and ZDHHC17 (via ANK repeats). Interacts with TESK1. Interacts with NF1. In terms of processing, phosphorylated on serine and threonine residues. Phosphorylated on tyrosine. Phosphorylation of Tyr-228 and Tyr-231 are required for ubiquitination. Post-translationally, ubiquitinated; leading to degradation by the proteasome.

The protein resides in the cell membrane. It localises to the cytoplasmic vesicle. The protein localises to the secretory vesicle membrane. It is found in the cytoplasm. In terms of biological role, negatively regulates Ras signaling pathways and downstream activation of MAP kinases. Recruits and translocates NF1 to the cell membrane, thereby enabling NF1-dependent hydrolysis of active GTP-bound Ras to inactive GDP-bound Ras. Inhibits fibroblast growth factor (FGF)-induced retinal lens fiber differentiation, probably by inhibiting FGF-mediated phosphorylation of ERK1/2. Inhibits TGFB-induced epithelial-to-mesenchymal transition in lens epithelial cells. In Pongo abelii (Sumatran orangutan), this protein is Sprouty-related, EVH1 domain-containing protein 2 (SPRED2).